Reading from the N-terminus, the 89-residue chain is Small ribosomal subunit protein uS15 (89 aa).

This sequence belongs to the universal ribosomal protein uS15 family. Part of the 30S ribosomal subunit. Forms a bridge to the 50S subunit in the 70S ribosome, contacting the 23S rRNA.

In terms of biological role, one of the primary rRNA binding proteins, it binds directly to 16S rRNA where it helps nucleate assembly of the platform of the 30S subunit by binding and bridging several RNA helices of the 16S rRNA. Its function is as follows. Forms an intersubunit bridge (bridge B4) with the 23S rRNA of the 50S subunit in the ribosome. This chain is Small ribosomal subunit protein uS15, found in Mycobacterium leprae (strain Br4923).